Consider the following 175-residue polypeptide: Co-chaperone protein HscB homolog (175 aa).

Positions 2 to 76 (NYFALFNLTP…RAEHMLELRG (75 aa)) constitute a J domain.

This sequence belongs to the HscB family. As to quaternary structure, interacts with HscA and stimulates its ATPase activity.

In terms of biological role, co-chaperone involved in the maturation of iron-sulfur cluster-containing proteins. Seems to help targeting proteins to be folded toward HscA. The sequence is that of Co-chaperone protein HscB homolog from Pseudoalteromonas atlantica (strain T6c / ATCC BAA-1087).